The chain runs to 492 residues: Bifunctional purine biosynthesis protein PurH (492 aa).

Residues 1-144 form the MGS-like domain; sequence MKKVILSVSD…KNFKHVTTIV (144 aa).

It belongs to the PurH family.

The catalysed reaction is (6R)-10-formyltetrahydrofolate + 5-amino-1-(5-phospho-beta-D-ribosyl)imidazole-4-carboxamide = 5-formamido-1-(5-phospho-D-ribosyl)imidazole-4-carboxamide + (6S)-5,6,7,8-tetrahydrofolate. It catalyses the reaction IMP + H2O = 5-formamido-1-(5-phospho-D-ribosyl)imidazole-4-carboxamide. It functions in the pathway purine metabolism; IMP biosynthesis via de novo pathway; 5-formamido-1-(5-phospho-D-ribosyl)imidazole-4-carboxamide from 5-amino-1-(5-phospho-D-ribosyl)imidazole-4-carboxamide (10-formyl THF route): step 1/1. It participates in purine metabolism; IMP biosynthesis via de novo pathway; IMP from 5-formamido-1-(5-phospho-D-ribosyl)imidazole-4-carboxamide: step 1/1. This Staphylococcus carnosus (strain TM300) protein is Bifunctional purine biosynthesis protein PurH.